The sequence spans 91 residues: N(2)-fixation sustaining protein CowN (91 aa).

Belongs to the CowN family.

Its function is as follows. Is required to sustain N(2)-dependent growth in the presence of low levels of carbon monoxide (CO). Probably acts by protecting the N(2) fixation ability of the nitrogenase complex, which is inactivated in the presence of CO. The chain is N(2)-fixation sustaining protein CowN from Gluconacetobacter diazotrophicus (strain ATCC 49037 / DSM 5601 / CCUG 37298 / CIP 103539 / LMG 7603 / PAl5).